Consider the following 277-residue polypeptide: 5-formyltetrahydrofolate cyclo-ligase, mitochondrial (277 aa).

The N-terminal 48 residues, 1-48, are a transit peptide targeting the mitochondrion; it reads MIGARVFCITTTALRRSPIFFFPKIPTRPVFRLSPATRPIVAMSTTSK. 60-64 lines the ATP pocket; it reads KRVVR. Substrate-binding positions include E113 and 207-211; that span reads RGGGY. Residues 206-213 and D254 each bind ATP; that span reads GRGGGYYD.

The protein belongs to the 5-formyltetrahydrofolate cyclo-ligase family. As to quaternary structure, monomer.

It localises to the mitochondrion. The enzyme catalyses (6S)-5-formyl-5,6,7,8-tetrahydrofolate + ATP = (6R)-5,10-methenyltetrahydrofolate + ADP + phosphate. In terms of biological role, contributes to tetrahydrofolate metabolism and photorespiration through the regulation of serine hydroxymethyltransferase. Prefers the pentalutamyl to the monoglutamyl form of 5-formyltetrahydrofolate. The protein is 5-formyltetrahydrofolate cyclo-ligase, mitochondrial (5FCL) of Arabidopsis thaliana (Mouse-ear cress).